A 155-amino-acid chain; its full sequence is Ribosome maturation factor RimP (155 aa).

This sequence belongs to the RimP family.

Its subcellular location is the cytoplasm. Required for maturation of 30S ribosomal subunits. This Staphylococcus carnosus (strain TM300) protein is Ribosome maturation factor RimP.